Reading from the N-terminus, the 268-residue chain is Shikimate dehydrogenase (NADP(+)) (268 aa).

Shikimate-binding positions include 14–16 and T61; that span reads SKS. K65 serves as the catalytic Proton acceptor. N86 and D102 together coordinate shikimate. Residues 126 to 130, 149 to 154, and M213 each bind NADP(+); these read GAGGA and NRTFLK. Shikimate is bound at residue Y215. G238 provides a ligand contact to NADP(+).

This sequence belongs to the shikimate dehydrogenase family. In terms of assembly, homodimer.

It catalyses the reaction shikimate + NADP(+) = 3-dehydroshikimate + NADPH + H(+). Its pathway is metabolic intermediate biosynthesis; chorismate biosynthesis; chorismate from D-erythrose 4-phosphate and phosphoenolpyruvate: step 4/7. Its function is as follows. Involved in the biosynthesis of the chorismate, which leads to the biosynthesis of aromatic amino acids. Catalyzes the reversible NADPH linked reduction of 3-dehydroshikimate (DHSA) to yield shikimate (SA). The polypeptide is Shikimate dehydrogenase (NADP(+)) (Haemophilus influenzae (strain PittGG)).